Consider the following 255-residue polypeptide: Acetylglutamate kinase (255 aa).

Substrate is bound by residues 40 to 41, Arg62, and Asn153; that span reads GG.

Belongs to the acetylglutamate kinase family. ArgB subfamily.

Its subcellular location is the cytoplasm. It catalyses the reaction N-acetyl-L-glutamate + ATP = N-acetyl-L-glutamyl 5-phosphate + ADP. The protein operates within amino-acid biosynthesis; L-arginine biosynthesis; N(2)-acetyl-L-ornithine from L-glutamate: step 2/4. In terms of biological role, catalyzes the ATP-dependent phosphorylation of N-acetyl-L-glutamate. The chain is Acetylglutamate kinase from Bacillus cereus (strain ZK / E33L).